The sequence spans 402 residues: 4-hydroxy-3-methylbut-2-enyl diphosphate reductase (402 aa).

A [4Fe-4S] cluster-binding site is contributed by cysteine 66. Histidine 96 is a binding site for (2E)-4-hydroxy-3-methylbut-2-enyl diphosphate. Residue histidine 96 coordinates dimethylallyl diphosphate. Histidine 96 provides a ligand contact to isopentenyl diphosphate. Residue cysteine 157 participates in [4Fe-4S] cluster binding. Residue histidine 185 participates in (2E)-4-hydroxy-3-methylbut-2-enyl diphosphate binding. Histidine 185 contacts dimethylallyl diphosphate. Histidine 185 is an isopentenyl diphosphate binding site. The Proton donor role is filled by glutamate 187. Position 250 (threonine 250) interacts with (2E)-4-hydroxy-3-methylbut-2-enyl diphosphate. [4Fe-4S] cluster is bound at residue cysteine 288. (2E)-4-hydroxy-3-methylbut-2-enyl diphosphate contacts are provided by serine 317, serine 318, asparagine 319, and serine 379. Dimethylallyl diphosphate-binding residues include serine 317, serine 318, asparagine 319, and serine 379. Serine 317, serine 318, asparagine 319, and serine 379 together coordinate isopentenyl diphosphate.

Belongs to the IspH family. [4Fe-4S] cluster serves as cofactor.

It catalyses the reaction isopentenyl diphosphate + 2 oxidized [2Fe-2S]-[ferredoxin] + H2O = (2E)-4-hydroxy-3-methylbut-2-enyl diphosphate + 2 reduced [2Fe-2S]-[ferredoxin] + 2 H(+). The catalysed reaction is dimethylallyl diphosphate + 2 oxidized [2Fe-2S]-[ferredoxin] + H2O = (2E)-4-hydroxy-3-methylbut-2-enyl diphosphate + 2 reduced [2Fe-2S]-[ferredoxin] + 2 H(+). Its pathway is isoprenoid biosynthesis; dimethylallyl diphosphate biosynthesis; dimethylallyl diphosphate from (2E)-4-hydroxy-3-methylbutenyl diphosphate: step 1/1. It functions in the pathway isoprenoid biosynthesis; isopentenyl diphosphate biosynthesis via DXP pathway; isopentenyl diphosphate from 1-deoxy-D-xylulose 5-phosphate: step 6/6. Its function is as follows. Catalyzes the conversion of 1-hydroxy-2-methyl-2-(E)-butenyl 4-diphosphate (HMBPP) into a mixture of isopentenyl diphosphate (IPP) and dimethylallyl diphosphate (DMAPP). Acts in the terminal step of the DOXP/MEP pathway for isoprenoid precursor biosynthesis. The protein is 4-hydroxy-3-methylbut-2-enyl diphosphate reductase of Trichormus variabilis (strain ATCC 29413 / PCC 7937) (Anabaena variabilis).